The sequence spans 204 residues: Cytochrome bo(3) ubiquinol oxidase subunit 3 (204 aa).

At 1–31 (MATDTLTHATAHAHEHGHHDAGGTKIFGFWI) the chain is on the cytoplasmic side. The helical transmembrane segment at 32–50 (YLMSDCILFSILFATYAVL) threads the bilayer. Topologically, residues 51–66 (VNGTAGGPTGKDIFEL) are periplasmic. Residues 67–85 (PFVLVETFLLLFSSITYGM) traverse the membrane as a helical segment. Over 86 to 101 (AAIAMYKNNKSQVISW) the chain is Cytoplasmic. Residues 102 to 120 (LALTWLFGAGFIGMEIYEF) traverse the membrane as a helical segment. At 121 to 142 (HHLIVNGMGPDRSGFLSAFFAL) the chain is on the periplasmic side. The helical transmembrane segment at 143–161 (VGTHGLHVTSGLIWMAVLM) threads the bilayer. Residues 162 to 184 (VQIARRGLTSTNRTRIMCLSLFW) are Cytoplasmic-facing. A helical transmembrane segment spans residues 185–203 (HFLDVVWICVFTVVYLMGA). Methionine 204 is a topological domain (periplasmic).

The protein belongs to the cytochrome c oxidase subunit 3 family. In terms of assembly, heterooctamer of two A chains, two B chains, two C chains and two D chains.

The protein resides in the cell inner membrane. Cytochrome bo(3) ubiquinol terminal oxidase is the component of the aerobic respiratory chain of E.coli that predominates when cells are grown at high aeration. Has proton pump activity across the membrane in addition to electron transfer, pumping 2 protons/electron. The protein is Cytochrome bo(3) ubiquinol oxidase subunit 3 (cyoC) of Escherichia coli O6:H1 (strain CFT073 / ATCC 700928 / UPEC).